Here is a 120-residue protein sequence, read N- to C-terminus: Large ribosomal subunit protein bL19 (120 aa).

This sequence belongs to the bacterial ribosomal protein bL19 family.

Its function is as follows. This protein is located at the 30S-50S ribosomal subunit interface and may play a role in the structure and function of the aminoacyl-tRNA binding site. In Kocuria rhizophila (strain ATCC 9341 / DSM 348 / NBRC 103217 / DC2201), this protein is Large ribosomal subunit protein bL19.